The following is a 416-amino-acid chain: Kynureninase (416 aa).

Residues threonine 97, serine 98, 129–132, threonine 172, aspartate 201, histidine 204, and tyrosine 226 contribute to the pyridoxal 5'-phosphate site; that span reads FPTD. Position 227 is an N6-(pyridoxal phosphate)lysine (lysine 227). Pyridoxal 5'-phosphate contacts are provided by tryptophan 256 and threonine 282.

Belongs to the kynureninase family. As to quaternary structure, homodimer. Pyridoxal 5'-phosphate is required as a cofactor.

The catalysed reaction is L-kynurenine + H2O = anthranilate + L-alanine + H(+). It carries out the reaction 3-hydroxy-L-kynurenine + H2O = 3-hydroxyanthranilate + L-alanine + H(+). It functions in the pathway amino-acid degradation; L-kynurenine degradation; L-alanine and anthranilate from L-kynurenine: step 1/1. The protein operates within cofactor biosynthesis; NAD(+) biosynthesis; quinolinate from L-kynurenine: step 2/3. Functionally, catalyzes the cleavage of L-kynurenine (L-Kyn) and L-3-hydroxykynurenine (L-3OHKyn) into anthranilic acid (AA) and 3-hydroxyanthranilic acid (3-OHAA), respectively. This Pseudomonas fluorescens protein is Kynureninase.